Here is a 434-residue protein sequence, read N- to C-terminus: Methylenetetrahydrofolate--tRNA-(uracil-5-)-methyltransferase TrmFO (434 aa).

Residue 10–15 (GAGLAG) participates in FAD binding.

It belongs to the MnmG family. TrmFO subfamily. The cofactor is FAD.

The protein localises to the cytoplasm. The catalysed reaction is uridine(54) in tRNA + (6R)-5,10-methylene-5,6,7,8-tetrahydrofolate + NADH + H(+) = 5-methyluridine(54) in tRNA + (6S)-5,6,7,8-tetrahydrofolate + NAD(+). It catalyses the reaction uridine(54) in tRNA + (6R)-5,10-methylene-5,6,7,8-tetrahydrofolate + NADPH + H(+) = 5-methyluridine(54) in tRNA + (6S)-5,6,7,8-tetrahydrofolate + NADP(+). In terms of biological role, catalyzes the folate-dependent formation of 5-methyl-uridine at position 54 (M-5-U54) in all tRNAs. This chain is Methylenetetrahydrofolate--tRNA-(uracil-5-)-methyltransferase TrmFO, found in Bacillus anthracis (strain A0248).